The sequence spans 249 residues: 23S rRNA (guanosine-2'-O-)-methyltransferase RlmB (249 aa).

Positions 197, 217, and 226 each coordinate S-adenosyl-L-methionine.

Belongs to the class IV-like SAM-binding methyltransferase superfamily. RNA methyltransferase TrmH family. RlmB subfamily.

Its subcellular location is the cytoplasm. The catalysed reaction is guanosine(2251) in 23S rRNA + S-adenosyl-L-methionine = 2'-O-methylguanosine(2251) in 23S rRNA + S-adenosyl-L-homocysteine + H(+). Functionally, specifically methylates the ribose of guanosine 2251 in 23S rRNA. In Ralstonia nicotianae (strain ATCC BAA-1114 / GMI1000) (Ralstonia solanacearum), this protein is 23S rRNA (guanosine-2'-O-)-methyltransferase RlmB.